Reading from the N-terminus, the 77-residue chain is Defensin-like protein 161 (77 aa).

A signal peptide spans 1-27; the sequence is MAKLSCSYLLVFMLVFSAILMVEKVEG. Disulfide bonds link cysteine 30-cysteine 77, cysteine 40-cysteine 59, cysteine 45-cysteine 71, and cysteine 49-cysteine 73.

Belongs to the DEFL family.

The protein localises to the secreted. This Arabidopsis thaliana (Mouse-ear cress) protein is Defensin-like protein 161 (LCR27).